The sequence spans 438 residues: Enolase (438 aa).

Residues His-159 and Glu-168 each coordinate substrate. The active-site Proton donor is the Glu-211. Residues Asp-246, Glu-297, and Asp-322 each coordinate Mg(2+). Substrate contacts are provided by Glu-297 and Asp-322. Lys-347 serves as the catalytic Proton acceptor. Substrate-binding positions include 374 to 377 (SHRS) and Lys-398.

This sequence belongs to the enolase family. As to quaternary structure, homodimer. Mg(2+) is required as a cofactor.

The protein resides in the cytoplasm. The enzyme catalyses (2R)-2-phosphoglycerate = phosphoenolpyruvate + H2O. It participates in carbohydrate degradation; glycolysis; pyruvate from D-glyceraldehyde 3-phosphate: step 4/5. The sequence is that of Enolase (enoA) from Aspergillus fumigatus (strain ATCC MYA-4609 / CBS 101355 / FGSC A1100 / Af293) (Neosartorya fumigata).